We begin with the raw amino-acid sequence, 232 residues long: Biosynthetic peptidoglycan transglycosylase (232 aa).

A helical transmembrane segment spans residues 12–31 (YLLWFMAASVVLVAVLRWVP).

The protein belongs to the glycosyltransferase 51 family.

The protein localises to the cell inner membrane. The catalysed reaction is [GlcNAc-(1-&gt;4)-Mur2Ac(oyl-L-Ala-gamma-D-Glu-L-Lys-D-Ala-D-Ala)](n)-di-trans,octa-cis-undecaprenyl diphosphate + beta-D-GlcNAc-(1-&gt;4)-Mur2Ac(oyl-L-Ala-gamma-D-Glu-L-Lys-D-Ala-D-Ala)-di-trans,octa-cis-undecaprenyl diphosphate = [GlcNAc-(1-&gt;4)-Mur2Ac(oyl-L-Ala-gamma-D-Glu-L-Lys-D-Ala-D-Ala)](n+1)-di-trans,octa-cis-undecaprenyl diphosphate + di-trans,octa-cis-undecaprenyl diphosphate + H(+). It participates in cell wall biogenesis; peptidoglycan biosynthesis. Its function is as follows. Peptidoglycan polymerase that catalyzes glycan chain elongation from lipid-linked precursors. The polypeptide is Biosynthetic peptidoglycan transglycosylase (Pseudomonas aeruginosa (strain ATCC 15692 / DSM 22644 / CIP 104116 / JCM 14847 / LMG 12228 / 1C / PRS 101 / PAO1)).